The chain runs to 682 residues: DNA-directed RNA polymerase subunit beta' (682 aa).

Zn(2+)-binding residues include cysteine 69, cysteine 71, cysteine 87, and cysteine 90. 3 residues coordinate Mg(2+): aspartate 491, aspartate 493, and aspartate 495.

The protein belongs to the RNA polymerase beta' chain family. RpoC1 subfamily. In terms of assembly, in plastids the minimal PEP RNA polymerase catalytic core is composed of four subunits: alpha, beta, beta', and beta''. When a (nuclear-encoded) sigma factor is associated with the core the holoenzyme is formed, which can initiate transcription. Mg(2+) serves as cofactor. Requires Zn(2+) as cofactor.

It localises to the plastid. The protein resides in the chloroplast. It carries out the reaction RNA(n) + a ribonucleoside 5'-triphosphate = RNA(n+1) + diphosphate. Its function is as follows. DNA-dependent RNA polymerase catalyzes the transcription of DNA into RNA using the four ribonucleoside triphosphates as substrates. The chain is DNA-directed RNA polymerase subunit beta' from Lotus japonicus (Lotus corniculatus var. japonicus).